The sequence spans 629 residues: Putative polypeptide N-acetylgalactosaminyltransferase 10 (629 aa).

The Cytoplasmic segment spans residues 1–12 (MGLSRYLSRRHH). The helical; Signal-anchor for type II membrane protein transmembrane segment at 13 to 33 (WVIQYCALLLFLYFIYSYVAV) threads the bilayer. At 34 to 629 (SNDAPRLNEE…RQANEHKELE (596 aa)) the chain is on the lumenal side. N143 and N177 each carry an N-linked (GlcNAc...) asparagine glycan. 5 disulfide bridges follow: C154–C385, C376–C454, C493–C510, C539–C556, and C582–C598. Residues 163–275 (LPTVSVIFPF…YNWLPPLLDP (113 aa)) are catalytic subdomain A. Substrate-binding residues include D204 and R236. Mn(2+)-binding residues include D259 and H261. Positions 331–393 (PFDSPVMAGG…PCSRVAHIYR (63 aa)) are catalytic subdomain B. A substrate-binding site is contributed by W362. Position 390 (H390) interacts with Mn(2+). R393 lines the substrate pocket. The tract at residues 393–406 (RCKYAPFKNAGMGD) is flexible loop. Positions 526–629 (TRWHDIRPKG…RQANEHKELE (104 aa)) constitute a Ricin B-type lectin domain.

Belongs to the glycosyltransferase 2 family. GalNAc-T subfamily. It depends on Mn(2+) as a cofactor.

It localises to the golgi apparatus membrane. The catalysed reaction is L-seryl-[protein] + UDP-N-acetyl-alpha-D-galactosamine = a 3-O-[N-acetyl-alpha-D-galactosaminyl]-L-seryl-[protein] + UDP + H(+). It carries out the reaction L-threonyl-[protein] + UDP-N-acetyl-alpha-D-galactosamine = a 3-O-[N-acetyl-alpha-D-galactosaminyl]-L-threonyl-[protein] + UDP + H(+). It functions in the pathway protein modification; protein glycosylation. Its function is as follows. May catalyze the initial reaction in O-linked oligosaccharide biosynthesis, the transfer of an N-acetyl-D-galactosamine residue to a serine or threonine residue on the protein receptor. The chain is Putative polypeptide N-acetylgalactosaminyltransferase 10 from Caenorhabditis briggsae.